The chain runs to 80 residues: Exodeoxyribonuclease 7 small subunit (80 aa).

This sequence belongs to the XseB family. As to quaternary structure, heterooligomer composed of large and small subunits.

The protein localises to the cytoplasm. The enzyme catalyses Exonucleolytic cleavage in either 5'- to 3'- or 3'- to 5'-direction to yield nucleoside 5'-phosphates.. In terms of biological role, bidirectionally degrades single-stranded DNA into large acid-insoluble oligonucleotides, which are then degraded further into small acid-soluble oligonucleotides. This Rickettsia felis (strain ATCC VR-1525 / URRWXCal2) (Rickettsia azadi) protein is Exodeoxyribonuclease 7 small subunit.